Consider the following 471-residue polypeptide: UDP-N-acetylmuramate--L-alanine ligase (471 aa).

114–120 (GTHGKTT) provides a ligand contact to ATP.

The protein belongs to the MurCDEF family.

It is found in the cytoplasm. It carries out the reaction UDP-N-acetyl-alpha-D-muramate + L-alanine + ATP = UDP-N-acetyl-alpha-D-muramoyl-L-alanine + ADP + phosphate + H(+). It participates in cell wall biogenesis; peptidoglycan biosynthesis. Functionally, cell wall formation. In Rhizobium etli (strain ATCC 51251 / DSM 11541 / JCM 21823 / NBRC 15573 / CFN 42), this protein is UDP-N-acetylmuramate--L-alanine ligase.